The primary structure comprises 957 residues: MATIQLTDQQRKVLHEVACTTAAPVLDTASKDKIKQLLDDYDMRKAAMGSKPGANMVLPGQVLGEAGPFLDYGHPPGVALGDKFKDRGQVMVAGVHGTTVRGIHAPNAGSEHFVRGAYSVLMSGVYVDDEDMGEAFWYTGEGGMDGKKQVKDQQMASGSNAALKNNCDTRTPVRVVRGFVQEAGGGEGGGGGEGGGGAKKGKGGKGGGKKEKGLVYEGLYLVLECKMEPSKDGPQVCKFLMHGLPGHSTVSAKVEYNIFGNAGSAYSLHARRLAGAGAPAGGKRARKAAQDEKARELARQWMLSEIRRQYPGPELQLEDVSGGQEAVPIPVINQVNSERLPTDFAYTREYAWAPGVYQLVAPALRLADEEMLQFSREGDRGGVCGIAFNRHIAALDRRLEQEGRLPQGYEAHLEEQYNAAGCLMVTDPCGVHECGDGCSAKACRRNMQLSAGVQLPLEVFMTESKGWGVRCREEVPAGAFVCCYVGQLITDAMAEVRKGVDHYLFDLDFFAHIYAEIAEKGMQAVAEEIPLHKIPPVLSVGMIRQAQINAADAARRLPEQQPQQQQPQQQQQQPAAGGAAPGGAAAGEQAAGGAEGGGAYGGGGAAAAATAAGTAPGAGDNMDGVEGPAAQRSGGEEAAAGPGSSGAAGGCGYRLDGMVTREGLAQAAHALAEACDALARSVADGASTNLGGENILAAIEAAKARAAAAATTSGGAAAADQHQLEQLDRAAALAAASKAAADAVKAGDPGAFYLQPIISRDEEKAAERAAAAAAAAAAAAGVPPALPSTSDVGNGGTTGSGGGGGAFSNRGPAGCAVGSPRALAARSGMEAAAQAAGGAASGPVAGPGAVEDHGEEYAPMLVIDARTTGNVGRFINHSCDGNLTIQAVFAGVYRSTLLYHVGLYACRNIPQLEELSYNYGYHKQQQQQQQAQRGGAAEKQFVMQCNCGAVGCIGNLM.

A YDG domain is found at 73–243 (GHPPGVALGD…PQVCKFLMHG (171 aa)). The segment at 182–209 (EAGGGEGGGGGEGGGGAKKGKGGKGGGK) is disordered. The segment covering 183–198 (AGGGEGGGGGEGGGGA) has biased composition (gly residues). One can recognise a Pre-SET domain in the interval 319 to 441 (DVSGGQEAVP…HECGDGCSAK (123 aa)). An SET domain is found at 455 to 920 (LPLEVFMTES…QLEELSYNYG (466 aa)). Disordered regions lie at residues 552–595 (DAAR…GGAE), 611–647 (AAGT…SSGA), and 783–805 (PPAL…GGGG). Positions 560-578 (QQPQQQQPQQQQQQPAAGG) are enriched in low complexity. The segment covering 793–805 (GNGGTTGSGGGGG) has biased composition (gly residues). The Post-SET domain maps to 941–957 (FVMQCNCGAVGCIGNLM).

This sequence belongs to the class V-like SAM-binding methyltransferase superfamily. Histone-lysine methyltransferase family. Suvar3-9 subfamily.

The protein localises to the nucleus. It localises to the chromosome. It carries out the reaction L-lysyl(9)-[histone H3] + S-adenosyl-L-methionine = N(6)-methyl-L-lysyl(9)-[histone H3] + S-adenosyl-L-homocysteine + H(+). In terms of biological role, histone methyltransferase. Monomethylates specifically 'Lys-9' of histone H3. H3 'Lys-9Me1' (H3K9me1) functions as an epigenetic mark of repressed chromatin. In Chlamydomonas reinhardtii (Chlamydomonas smithii), this protein is Histone-lysine N-methyltransferase, H3 lysine-9 specific SUVH3 (SUVH3).